We begin with the raw amino-acid sequence, 445 residues long: MAVGNGLILYHILGLASCIALVYFSLGEVDLRDALPSLPFSGGASRAAAASLPFVERRGKRLFLDGRPFYINGWNSYWLMDLAVEPNTRPRVSSMFRTAVSMGLTVCRTWAFNDGSYNALQLSPGHFDERVFKALDRVVAEASEHGVRLILSLANNLDAYGGKRQYVRWAWEEGVGLTASNDSFFFDPAIRDYFKVYLKTLLMRKNHLTGLEYRDDPTILAWELMNEPRCTSDPSGDTLQRWMEEMSAYVKSIDKKHLLTVGTEGFYGPTSSQEKLNINPGEWFPNNYGADFIRNSKIQDIDFASVHVYPDNWLQHASLDEKLKFMTRWITAHVEDGDGELEKPVLVTEFGLSHQVEGFEDAHRDVLYRAVYDIVHGSARRGGAAGGALVWQLAAEGMEEYHDGFSIVPSERPSMMRLIKEQSCRLAAVRYGEEGARKVLKTVCA.

Positions 1 to 27 are cleaved as a signal peptide; it reads MAVGNGLILYHILGLASCIALVYFSLG. W110 contributes to the substrate binding site. A glycan (N-linked (GlcNAc...) asparagine) is linked at N181. N226 lines the substrate pocket. E227 serves as the catalytic Proton donor. Substrate is bound at residue Y309. The active-site Nucleophile is E349. A substrate-binding site is contributed by W391.

It belongs to the glycosyl hydrolase 5 (cellulase A) family. Expressed in stems and seeds, and at lower levels in roots and leaves.

It localises to the secreted. The enzyme catalyses Random hydrolysis of (1-&gt;4)-beta-D-mannosidic linkages in mannans, galactomannans and glucomannans.. In Oryza sativa subsp. japonica (Rice), this protein is Mannan endo-1,4-beta-mannosidase 2 (MAN2).